Reading from the N-terminus, the 94-residue chain is Ribonuclease VapC3 (94 aa).

Residue Asp6 participates in Mg(2+) binding.

Belongs to the PINc/VapC protein family. Requires Mg(2+) as cofactor.

Its function is as follows. Toxic component of a type II toxin-antitoxin (TA) system. An RNase. Its cognate antitoxin is VapB3. This is Ribonuclease VapC3 (vapC3) from Methanocaldococcus jannaschii (strain ATCC 43067 / DSM 2661 / JAL-1 / JCM 10045 / NBRC 100440) (Methanococcus jannaschii).